The following is a 943-amino-acid chain: Translation initiation factor IF-2 (943 aa).

Positions 99–113 are enriched in low complexity; it reads VKAAQTQAAPVQPEQ. The interval 99-354 is disordered; the sequence is VKAAQTQAAP…LEPNQHAFQA (256 aa). Residues 117 to 141 are compositionally biased toward basic and acidic residues; the sequence is DAVKARAEAAARAEARAKAEAEAAK. Low complexity predominate over residues 145-172; sequence AKAGNKAKPAAQKPTEAKAETAPVAAET. The segment covering 173–197 has biased composition (basic and acidic residues); that stretch reads KPAEPKEKAVKPKHERNGKGKDAKK. Low complexity predominate over residues 200-215; it reads KPAAPAVPQPVVSAEE. Residues 216–250 are compositionally biased toward basic and acidic residues; sequence QAQRDEEARRAAALRAHQEALLKEKQERQARREAM. Low complexity predominate over residues 251–264; that stretch reads KQQAEQQAKAAQEA. Composition is skewed to basic and acidic residues over residues 295 to 308 and 319 to 335; these read AKKE…DEGQ and GGRD…ERVR. The 170-residue stretch at 443-612 folds into the tr-type G domain; it reads PRPPVVTVMG…LLEAEVLELT (170 aa). The segment at 452 to 459 is G1; that stretch reads GHVDHGKT. 452 to 459 lines the GTP pocket; sequence GHVDHGKT. The segment at 477–481 is G2; it reads GITQH. The G3 stretch occupies residues 498–501; the sequence is DTPG. Residues 498–502 and 552–555 contribute to the GTP site; these read DTPGH and NKID. The interval 552-555 is G4; sequence NKID. The G5 stretch occupies residues 588–590; sequence SAK.

Belongs to the TRAFAC class translation factor GTPase superfamily. Classic translation factor GTPase family. IF-2 subfamily.

It localises to the cytoplasm. In terms of biological role, one of the essential components for the initiation of protein synthesis. Protects formylmethionyl-tRNA from spontaneous hydrolysis and promotes its binding to the 30S ribosomal subunits. Also involved in the hydrolysis of GTP during the formation of the 70S ribosomal complex. The protein is Translation initiation factor IF-2 of Neisseria gonorrhoeae (strain ATCC 700825 / FA 1090).